The primary structure comprises 147 residues: Mitochondrial import receptor subunit TOM20 homolog (147 aa).

Residues 1–3 (MVA) are Mitochondrial intermembrane-facing. A helical membrane pass occupies residues 4–26 (VGKTSAIAAGVCGALLLGYCIYF). Residues 27-147 (DRKRRSDPNF…AQNLSEDDVE (121 aa)) are Cytoplasmic-facing.

Belongs to the Tom20 family. As to quaternary structure, forms part of the preprotein translocase complex of the outer mitochondrial membrane (TOM complex). Interacts with tom22.

It localises to the mitochondrion outer membrane. Functionally, central component of the receptor complex responsible for the recognition and translocation of cytosolically synthesized mitochondrial preproteins. Together with tom22 functions as the transit peptide receptor at the surface of the mitochondrion outer membrane and facilitates the movement of preproteins into the tom40 translocation pore. The protein is Mitochondrial import receptor subunit TOM20 homolog (tomm20) of Xenopus laevis (African clawed frog).